The following is a 738-amino-acid chain: Ribosomal RNA large subunit methyltransferase K/L (738 aa).

The 112-residue stretch at 46–157 folds into the THUMP domain; that stretch reads TAYRVCLWSR…ADQAVIGLDL (112 aa).

The protein belongs to the methyltransferase superfamily. RlmKL family.

Its subcellular location is the cytoplasm. It catalyses the reaction guanosine(2445) in 23S rRNA + S-adenosyl-L-methionine = N(2)-methylguanosine(2445) in 23S rRNA + S-adenosyl-L-homocysteine + H(+). It carries out the reaction guanosine(2069) in 23S rRNA + S-adenosyl-L-methionine = N(2)-methylguanosine(2069) in 23S rRNA + S-adenosyl-L-homocysteine + H(+). In terms of biological role, specifically methylates the guanine in position 2445 (m2G2445) and the guanine in position 2069 (m7G2069) of 23S rRNA. This is Ribosomal RNA large subunit methyltransferase K/L from Methylococcus capsulatus (strain ATCC 33009 / NCIMB 11132 / Bath).